Consider the following 516-residue polypeptide: Exodeoxyribonuclease 7 large subunit (516 aa).

It belongs to the XseA family. As to quaternary structure, heterooligomer composed of large and small subunits.

The protein localises to the cytoplasm. It catalyses the reaction Exonucleolytic cleavage in either 5'- to 3'- or 3'- to 5'-direction to yield nucleoside 5'-phosphates.. Functionally, bidirectionally degrades single-stranded DNA into large acid-insoluble oligonucleotides, which are then degraded further into small acid-soluble oligonucleotides. The chain is Exodeoxyribonuclease 7 large subunit from Chlamydia trachomatis serovar L2 (strain ATCC VR-902B / DSM 19102 / 434/Bu).